A 74-amino-acid polypeptide reads, in one-letter code: Transcription attenuation protein MtrB (74 aa).

It belongs to the MtrB family. Oligomer of 11 identical subunits arranged in doughnut-like structure.

Required for transcription attenuation control in the Trp operon. This trans-acting factor seems to recognize a 10 bases nucleotide sequence in the Trp leader transcript causing transcription termination. Binds the leader RNA only in presence of L-tryptophan. This is Transcription attenuation protein MtrB from Geobacillus sp. (strain WCH70).